Here is a 64-residue protein sequence, read N- to C-terminus: Large ribosomal subunit protein bL35 (64 aa).

A compositionally biased stretch (basic residues) spans 1-15; the sequence is MPKQKSHSGASKRFR. The disordered stretch occupies residues 1–22; sequence MPKQKSHSGASKRFRVTGSGKV.

This sequence belongs to the bacterial ribosomal protein bL35 family.

The sequence is that of Large ribosomal subunit protein bL35 from Frankia casuarinae (strain DSM 45818 / CECT 9043 / HFP020203 / CcI3).